The sequence spans 1162 residues: DNA-directed RNA polymerase subunit beta 1 (1162 aa).

The protein belongs to the RNA polymerase beta chain family. In terms of assembly, the RNAP catalytic core consists of 2 alpha, 1 beta, 1 beta' and 1 omega subunit. When a sigma factor is associated with the core the holoenzyme is formed, which can initiate transcription.

It carries out the reaction RNA(n) + a ribonucleoside 5'-triphosphate = RNA(n+1) + diphosphate. In terms of biological role, DNA-dependent RNA polymerase catalyzes the transcription of DNA into RNA using the four ribonucleoside triphosphates as substrates. This Nocardia farcinica (strain IFM 10152) protein is DNA-directed RNA polymerase subunit beta 1.